Reading from the N-terminus, the 471-residue chain is Sulfate adenylyltransferase subunit 1 (471 aa).

The tr-type G domain maps to 22-239 (KDMLRFLTCG…NIEIGEDDNL (218 aa)). The interval 31 to 38 (GSVDDGKS) is G1. A GTP-binding site is contributed by 31–38 (GSVDDGKS). The tract at residues 89–93 (GITID) is G2. The interval 110–113 (DTPG) is G3. Residues 110-114 (DTPGH) and 165-168 (NKMD) each bind GTP. The G4 stretch occupies residues 165–168 (NKMD). The interval 202–204 (SAL) is G5.

Belongs to the TRAFAC class translation factor GTPase superfamily. Classic translation factor GTPase family. CysN/NodQ subfamily. As to quaternary structure, heterodimer composed of CysD, the smaller subunit, and CysN.

The catalysed reaction is sulfate + ATP + H(+) = adenosine 5'-phosphosulfate + diphosphate. It functions in the pathway sulfur metabolism; hydrogen sulfide biosynthesis; sulfite from sulfate: step 1/3. In terms of biological role, with CysD forms the ATP sulfurylase (ATPS) that catalyzes the adenylation of sulfate producing adenosine 5'-phosphosulfate (APS) and diphosphate, the first enzymatic step in sulfur assimilation pathway. APS synthesis involves the formation of a high-energy phosphoric-sulfuric acid anhydride bond driven by GTP hydrolysis by CysN coupled to ATP hydrolysis by CysD. In Alteromonas mediterranea (strain DSM 17117 / CIP 110805 / LMG 28347 / Deep ecotype), this protein is Sulfate adenylyltransferase subunit 1.